The following is a 461-amino-acid chain: Bifunctional protein GlmU (461 aa).

The pyrophosphorylase stretch occupies residues 1-234; that stretch reads MSLSVVILAA…EIEVEGANNR (234 aa). UDP-N-acetyl-alpha-D-glucosamine is bound by residues 8-11, lysine 22, glutamine 77, 82-83, 104-106, glycine 141, glutamate 159, asparagine 174, and asparagine 232; these read LAAG, GT, and YGD. Position 106 (aspartate 106) interacts with Mg(2+). Asparagine 232 is a binding site for Mg(2+). A linker region spans residues 235–255; that stretch reads VQLATLERAYQARIAEELMIA. Residues 256 to 461 form an N-acetyltransferase region; sequence GASLRDPARI…AGWQRPVKKS (206 aa). Positions 338 and 356 each coordinate UDP-N-acetyl-alpha-D-glucosamine. Histidine 368 (proton acceptor) is an active-site residue. 2 residues coordinate UDP-N-acetyl-alpha-D-glucosamine: tyrosine 371 and asparagine 382. Residues alanine 385, 391–392, serine 410, alanine 428, and arginine 445 contribute to the acetyl-CoA site; that span reads NY.

The protein in the N-terminal section; belongs to the N-acetylglucosamine-1-phosphate uridyltransferase family. It in the C-terminal section; belongs to the transferase hexapeptide repeat family. Homotrimer. It depends on Mg(2+) as a cofactor.

It is found in the cytoplasm. It catalyses the reaction alpha-D-glucosamine 1-phosphate + acetyl-CoA = N-acetyl-alpha-D-glucosamine 1-phosphate + CoA + H(+). It carries out the reaction N-acetyl-alpha-D-glucosamine 1-phosphate + UTP + H(+) = UDP-N-acetyl-alpha-D-glucosamine + diphosphate. Its pathway is nucleotide-sugar biosynthesis; UDP-N-acetyl-alpha-D-glucosamine biosynthesis; N-acetyl-alpha-D-glucosamine 1-phosphate from alpha-D-glucosamine 6-phosphate (route II): step 2/2. The protein operates within nucleotide-sugar biosynthesis; UDP-N-acetyl-alpha-D-glucosamine biosynthesis; UDP-N-acetyl-alpha-D-glucosamine from N-acetyl-alpha-D-glucosamine 1-phosphate: step 1/1. It participates in bacterial outer membrane biogenesis; LPS lipid A biosynthesis. Its function is as follows. Catalyzes the last two sequential reactions in the de novo biosynthetic pathway for UDP-N-acetylglucosamine (UDP-GlcNAc). The C-terminal domain catalyzes the transfer of acetyl group from acetyl coenzyme A to glucosamine-1-phosphate (GlcN-1-P) to produce N-acetylglucosamine-1-phosphate (GlcNAc-1-P), which is converted into UDP-GlcNAc by the transfer of uridine 5-monophosphate (from uridine 5-triphosphate), a reaction catalyzed by the N-terminal domain. In Colwellia psychrerythraea (strain 34H / ATCC BAA-681) (Vibrio psychroerythus), this protein is Bifunctional protein GlmU.